The sequence spans 655 residues: Alpha-L-iduronidase (655 aa).

Residues 1-25 (MRPPGPRAPGLALLAALLAAPRALA) form the signal peptide. Proline 53, leucine 55, and histidine 57 together coordinate alpha-D-mannopyranose. Histidine 90 is an alpha-L-iduronate binding site. The N-linked (GlcNAc...) asparagine glycan is linked to asparagine 109. Residues asparagine 180 and glutamate 181 each contribute to the alpha-L-iduronate site. The active-site Proton donor is the glutamate 181. Asparagine 189 and asparagine 242 each carry an N-linked (GlcNAc...) asparagine glycan. The alpha-L-iduronate site is built by lysine 263, glutamate 298, and glycine 304. The Nucleophile role is filled by glutamate 298. Tryptophan 305 serves as a coordination point for alpha-D-mannopyranose. A glycan (N-linked (GlcNAc...) asparagine) is linked at asparagine 335. 2 residues coordinate alpha-L-iduronate: aspartate 348 and arginine 362. Asparagine 371 and asparagine 414 each carry an N-linked (GlcNAc...) asparagine glycan. Cysteine 540 and cysteine 576 are joined by a disulfide.

The protein belongs to the glycosyl hydrolase 39 family. As to quaternary structure, monomer. In terms of processing, a smaller 63 kDa protein probably arises from IDUA protein by proteolytic cleavage. N-glycosylation contributes to substrate binding and is required for full enzymatic activity. In terms of tissue distribution, detected in testis (at protein level). Expressed ubiquitously.

It is found in the lysosome. It catalyses the reaction Hydrolysis of unsulfated alpha-L-iduronosidic linkages in dermatan sulfate.. The chain is Alpha-L-iduronidase (IDUA) from Canis lupus familiaris (Dog).